We begin with the raw amino-acid sequence, 571 residues long: Glutamate--tRNA ligase (571 aa).

A 'HIGH' region motif is present at residues 114–124 (PNPNGPWHVGH). The segment at 431 to 453 (KPLAGGPESASPPLHPNDEDRGR) is disordered.

This sequence belongs to the class-I aminoacyl-tRNA synthetase family. Glutamate--tRNA ligase type 2 subfamily.

It is found in the cytoplasm. It catalyses the reaction tRNA(Glu) + L-glutamate + ATP = L-glutamyl-tRNA(Glu) + AMP + diphosphate. Its function is as follows. Catalyzes the attachment of glutamate to tRNA(Glu) in a two-step reaction: glutamate is first activated by ATP to form Glu-AMP and then transferred to the acceptor end of tRNA(Glu). The polypeptide is Glutamate--tRNA ligase (Natronomonas pharaonis (strain ATCC 35678 / DSM 2160 / CIP 103997 / JCM 8858 / NBRC 14720 / NCIMB 2260 / Gabara) (Halobacterium pharaonis)).